The chain runs to 122 residues: Large ribosomal subunit protein uL14c (122 aa).

It belongs to the universal ribosomal protein uL14 family. As to quaternary structure, part of the 50S ribosomal subunit.

Its subcellular location is the plastid. The protein resides in the chloroplast. Binds to 23S rRNA. In Coffea arabica (Arabian coffee), this protein is Large ribosomal subunit protein uL14c.